Reading from the N-terminus, the 191-residue chain is UPF0312 protein Shewmr4_1178 (191 aa).

Residues 1–22 (MKKQLLAALIGGSLLAPMAASA) form the signal peptide.

This sequence belongs to the UPF0312 family. Type 1 subfamily.

Its subcellular location is the periplasm. The chain is UPF0312 protein Shewmr4_1178 from Shewanella sp. (strain MR-4).